The following is a 256-amino-acid chain: F-actin-capping protein subunit beta (256 aa).

At M1 the chain carries N-acetylmethionine.

It belongs to the F-actin-capping protein beta subunit family. As to quaternary structure, component of the F-actin capping complex, composed of a heterodimer of an alpha and a beta subunit.

It is found in the cytoplasm. The protein resides in the cytoskeleton. F-actin-capping proteins bind in a Ca(2+)-independent manner to the fast growing ends of actin filaments (barbed end) thereby blocking the exchange of subunits at these ends. Unlike other capping proteins (such as gelsolin and severin), these proteins do not sever actin filaments. The polypeptide is F-actin-capping protein subunit beta (Arabidopsis thaliana (Mouse-ear cress)).